A 312-amino-acid chain; its full sequence is Cytochrome c biogenesis protein CcsA (312 aa).

8 helical membrane-spanning segments follow: residues 9 to 29, 44 to 64, 71 to 91, 111 to 131, 143 to 163, 216 to 236, 251 to 271, and 277 to 297; these read ILTHISFSIVSIVITIHLITF, GIIVTFFCITGLLVTRWISSG, LYESLIFLSWSFSLIHIIPYF, GFATSGILTEIHQSGILVPAL, MILGYAALLCGSLLSVALLVI, VISLGFTFLTIGILSGAVWAN, WAFITWIVFAIYLHTRTNINL, and AIIATIGFLIIWICYFGVNLL.

The protein belongs to the CcmF/CycK/Ccl1/NrfE/CcsA family. In terms of assembly, may interact with Ccs1.

The protein localises to the plastid. The protein resides in the chloroplast thylakoid membrane. Its function is as follows. Required during biogenesis of c-type cytochromes (cytochrome c6 and cytochrome f) at the step of heme attachment. The polypeptide is Cytochrome c biogenesis protein CcsA (Atropa belladonna (Belladonna)).